The primary structure comprises 241 residues: Small ribosomal subunit protein uS2 (241 aa).

Belongs to the universal ribosomal protein uS2 family.

This Enterobacter sp. (strain 638) protein is Small ribosomal subunit protein uS2.